A 125-amino-acid chain; its full sequence is MPTIQQLVRFERQTSEKKTKSPALKSCPQRRGVCTRVYTTTPKKPNSALRKVARVRLTSGFEVTAYIPGIGHNIQEHSVVLIRGGRVKDLPGCRYHVVRGSLDASGVKDRKQGRSKYGGKRPKGD.

The disordered stretch occupies residues Ala104–Asp125. Residues Gly113–Asp125 are compositionally biased toward basic residues.

It belongs to the universal ribosomal protein uS12 family. As to quaternary structure, part of the 30S ribosomal subunit.

It is found in the plastid. Its subcellular location is the chloroplast. In terms of biological role, with S4 and S5 plays an important role in translational accuracy. Located at the interface of the 30S and 50S subunits. The polypeptide is Small ribosomal subunit protein uS12c (rps12) (Emiliania huxleyi (Coccolithophore)).